The sequence spans 227 residues: MLKFIIGKKIGMTQVFDVKGNLMPVTVVEVGHCVVTDVRTVEKNGYSAVQLGFGEIKEKGLNKAQAVFFKRNNLSYKRTLKEFRVSEVAGFSVGHEIKADAFKAGDYVDVSAVTKGKGYAGVIKRHNFGMQPVSHGQSDRTRSRGSSGAQGPQKVLKGLKMSGHMGNEYVTVQKLLIVNVDAEKNVLLIKGSVPSANRGTLFISSTLKKIPKVLVAVVHKGTKVKKK.

The disordered stretch occupies residues 129 to 154 (GMQPVSHGQSDRTRSRGSSGAQGPQK).

The protein belongs to the universal ribosomal protein uL3 family. As to quaternary structure, part of the 50S ribosomal subunit. Forms a cluster with proteins L14 and L19.

Its function is as follows. One of the primary rRNA binding proteins, it binds directly near the 3'-end of the 23S rRNA, where it nucleates assembly of the 50S subunit. This Endomicrobium trichonymphae protein is Large ribosomal subunit protein uL3.